Consider the following 447-residue polypeptide: Chitobiosyldiphosphodolichol beta-mannosyltransferase (447 aa).

Over 1 to 2 (MT) the chain is Cytoplasmic. A helical; Signal-anchor for type II membrane protein transmembrane segment spans residues 3–23 (LVLLLSIFAICFSSVAFIQLL). The Lumenal segment spans residues 24-447 (PTRREKKSSE…IAGTFLGLVT (424 aa)).

It belongs to the glycosyltransferase group 1 family. Glycosyltransferase 33 subfamily.

It localises to the endoplasmic reticulum membrane. The catalysed reaction is an N,N'-diacetylchitobiosyl-diphospho-di-trans,poly-cis-dolichol + GDP-alpha-D-mannose = a beta-D-Man-(1-&gt;4)-beta-D-GlcNAc-(1-&gt;4)-alpha-D-GlcNAc-diphospho-di-trans,poly-cis-dolichol + GDP + H(+). It functions in the pathway protein modification; protein glycosylation. Participates in the formation of the lipid-linked precursor oligosaccharide for N-glycosylation. Involved in assembling the dolichol-pyrophosphate-GlcNAc(2)-Man(5) intermediate on the cytoplasmic surface of the ER. In Arthroderma benhamiae (strain ATCC MYA-4681 / CBS 112371) (Trichophyton mentagrophytes), this protein is Chitobiosyldiphosphodolichol beta-mannosyltransferase.